Consider the following 329-residue polypeptide: UPF0158 protein CT_429 (329 aa).

Residues Gly292 to Ser329 form a disordered region. Over residues Ser295–Glu313 the composition is skewed to acidic residues. A compositionally biased stretch (basic residues) spans Lys317–Ser329.

The protein belongs to the UPF0158 family.

This Chlamydia trachomatis serovar D (strain ATCC VR-885 / DSM 19411 / UW-3/Cx) protein is UPF0158 protein CT_429.